Reading from the N-terminus, the 381-residue chain is 2-oxoglutarate-dependent dioxygenase FGSG_00048 (381 aa).

Belongs to the iron/ascorbate-dependent oxidoreductase family. Requires Fe(2+) as cofactor.

It participates in mycotoxin biosynthesis. In terms of biological role, 2-oxoglutarate-dependent dioxygenase; part of the gene cluster that mediates the biosynthesis of gramillins A and B, bicyclic lipopeptides that induce cell death in maize leaves but not in wheat leaves. The nonribosomal peptide synthetase GRA1 incorporates respectively a glutamic adic (Glu), a leucine (Leu), a serine (Ser), a hydroxyglutamine (HOGln), a 2-amino decanoic acid, and 2 cysteins (CysB and CysA). The biosynthesis of 2-amino decanoic acid incorporated in gramillins could be initiated by a fatty acid synthase composed of the alpha and beta subunits FGSG_00036 and FGSG_11656. The cytochrome P450 monooxygenase FGSG_15680 could hydroxylate the fatty acid chain. Subsequent oxidation to the ketone by the oxidoreductase FGSG_00048 and transamination by aminotransferase FGSG_00049 could form 2-amino-decanoic acid. On the other hand, FGSG_15680 could also be responsible for the HO-modified glutamine at the gamma-position. Whether hydroxylation occurs on the fully assembled product or on the Gln residue prior to assembly into the gramillins requires further proof. The thioredoxin FGSG_00043 could also be required for the disulfide-bond formation between CysA and CysB. The specific involvement of the remaining proteins from the cluster is more difficult to discern, but could have broader regulatory (FGSG_00040 and FGSG_11657) or enzymatic functions (FGSG_00044 and FGSG_00045). The final C-domain of GRA1 does not possess the expected sequence of a termination CT domain, often implicated in macrocyclization and release of a cyclopeptidein fungal NRPs; and the thioesterase FGSG_00047 may act in concert with the terminal C-domain of GRA1 to catalyze the formation of the macrocyclic anhydride and release of the products. This is 2-oxoglutarate-dependent dioxygenase FGSG_00048 from Gibberella zeae (strain ATCC MYA-4620 / CBS 123657 / FGSC 9075 / NRRL 31084 / PH-1) (Wheat head blight fungus).